The following is a 762-amino-acid chain: N,N-dimethylformamidase beta subunit (762 aa).

As to quaternary structure, heterotetramer of two DmfA1 (alpha) and two DmfA2 (beta) subunits.

The enzyme catalyses N,N-dimethylformamide + H2O = dimethylamine + formate. Functionally, hydrolyzes N,N-dimethylformamide, and to a lesser extent N,N-dimethylacetamide and N,N-diethylacetamide. Has no activity against the substituted amides N-methylformamide, N-ethylformamide, N-ethylformamide and N-methylacetamide or the unsubstituted amides formamide, nicotinamide, acetoamide, benzamide, acetamide and acrylamide. The sequence is that of N,N-dimethylformamidase beta subunit from Paracoccus aminophilus.